Consider the following 708-residue polypeptide: DNA ligase (708 aa).

NAD(+) is bound by residues 35–39, 84–85, and Glu-118; these read DADYD and SL. The N6-AMP-lysine intermediate role is filled by Lys-120. Positions 141, 182, 303, and 327 each coordinate NAD(+). Residues Cys-419, Cys-422, Cys-437, and Cys-443 each contribute to the Zn(2+) site. Positions 628-708 constitute a BRCT domain; the sequence is TRASEVSGKT…GWAKIVADAQ (81 aa).

Belongs to the NAD-dependent DNA ligase family. LigA subfamily. The cofactor is Mg(2+). Requires Mn(2+) as cofactor.

The enzyme catalyses NAD(+) + (deoxyribonucleotide)n-3'-hydroxyl + 5'-phospho-(deoxyribonucleotide)m = (deoxyribonucleotide)n+m + AMP + beta-nicotinamide D-nucleotide.. Functionally, DNA ligase that catalyzes the formation of phosphodiester linkages between 5'-phosphoryl and 3'-hydroxyl groups in double-stranded DNA using NAD as a coenzyme and as the energy source for the reaction. It is essential for DNA replication and repair of damaged DNA. The sequence is that of DNA ligase from Rhizorhabdus wittichii (strain DSM 6014 / CCUG 31198 / JCM 15750 / NBRC 105917 / EY 4224 / RW1) (Sphingomonas wittichii).